Here is a 936-residue protein sequence, read N- to C-terminus: General transcription factor II-I repeat domain-containing protein 2 (936 aa).

A GTF2I-like 1 repeat occupies 95–189 (EACPGEAQLL…FLGAESQLGG (95 aa)). The tract at residues 199-222 (PTVPPNDSYGPVSVKTEPMEDSGT) is disordered. The stretch at 319–413 (LSGLEKIKQL…LPGLELSNVG (95 aa)) is one GTF2I-like 2 repeat.

This sequence belongs to the TFII-I family. As to expression, ubiquitous.

Its subcellular location is the nucleus. This chain is General transcription factor II-I repeat domain-containing protein 2 (Gtf2ird2), found in Mus musculus (Mouse).